An 882-amino-acid chain; its full sequence is Isoamylase 2, chloroplastic (882 aa).

Residues 1–70 constitute a chloroplast transit peptide; it reads MAAWSPSVGI…LQSYQFSKIC (70 aa).

This sequence belongs to the glycosyl hydrolase 13 family. In terms of assembly, associates with ISA1 to form the heteromultimeric complex Iso1 required for amylopectin synthesis.

The protein resides in the plastid. It localises to the chloroplast. It participates in glycan biosynthesis; starch biosynthesis. In terms of biological role, involved in the trimming of pre-amylopectin chains. Accelerates the crystallization of nascent amylopectin molecules during starch synthesis. ISA1 and ISA2 work exclusively together as a multimeric holoenzyme. ISA1-ISA2 removes preferentially branches that are very close to other branches. The sequence is that of Isoamylase 2, chloroplastic (ISA2) from Arabidopsis thaliana (Mouse-ear cress).